The sequence spans 612 residues: Putative zinc metalloproteinase C607.06c (612 aa).

H303 is a Zn(2+) binding site. E304 is an active-site residue. Zn(2+)-binding residues include H307 and H313. One can recognise a Jacalin-type lectin domain in the interval 477-612 (VYRSERYGLR…FMDSIGFFIK (136 aa)).

It belongs to the peptidase M10B family. The cofactor is Zn(2+).

The sequence is that of Putative zinc metalloproteinase C607.06c from Schizosaccharomyces pombe (strain 972 / ATCC 24843) (Fission yeast).